The chain runs to 121 residues: Large ribosomal subunit protein uL22 (121 aa).

It belongs to the universal ribosomal protein uL22 family. In terms of assembly, part of the 50S ribosomal subunit.

In terms of biological role, this protein binds specifically to 23S rRNA; its binding is stimulated by other ribosomal proteins, e.g. L4, L17, and L20. It is important during the early stages of 50S assembly. It makes multiple contacts with different domains of the 23S rRNA in the assembled 50S subunit and ribosome. Functionally, the globular domain of the protein is located near the polypeptide exit tunnel on the outside of the subunit, while an extended beta-hairpin is found that lines the wall of the exit tunnel in the center of the 70S ribosome. The sequence is that of Large ribosomal subunit protein uL22 from Beutenbergia cavernae (strain ATCC BAA-8 / DSM 12333 / CCUG 43141 / JCM 11478 / NBRC 16432 / NCIMB 13614 / HKI 0122).